Reading from the N-terminus, the 48-residue chain is Delta-actitoxin-Bcg1c (48 aa).

3 disulfides stabilise this stretch: C4–C45, C6–C35, and C28–C46.

The protein localises to the secreted. It localises to the nematocyst. Its function is as follows. Binds specifically to voltage-gated sodium channels SCN1A/Nav1.1, thereby delaying their inactivation during signal transduction. This Bunodosoma cangicum (Sea anemone) protein is Delta-actitoxin-Bcg1c.